The chain runs to 400 residues: Argininosuccinate synthase (400 aa).

Residue 10-18 (AFSGGLDTT) coordinates ATP. Residue Tyr87 participates in L-citrulline binding. Gly117 provides a ligand contact to ATP. Positions 119, 123, and 124 each coordinate L-aspartate. Residue Asn123 participates in L-citrulline binding. L-citrulline is bound by residues Arg127, Ser173, Ser182, Glu255, and Tyr267.

The protein belongs to the argininosuccinate synthase family. Type 1 subfamily. Homotetramer.

The protein localises to the cytoplasm. The catalysed reaction is L-citrulline + L-aspartate + ATP = 2-(N(omega)-L-arginino)succinate + AMP + diphosphate + H(+). The protein operates within amino-acid biosynthesis; L-arginine biosynthesis; L-arginine from L-ornithine and carbamoyl phosphate: step 2/3. The sequence is that of Argininosuccinate synthase from Natronomonas pharaonis (strain ATCC 35678 / DSM 2160 / CIP 103997 / JCM 8858 / NBRC 14720 / NCIMB 2260 / Gabara) (Halobacterium pharaonis).